The primary structure comprises 232 residues: Phosphatidylserine decarboxylase proenzyme (232 aa).

The active-site Schiff-base intermediate with substrate; via pyruvic acid is Ser190. Residue Ser190 is modified to Pyruvic acid (Ser); by autocatalysis.

Belongs to the phosphatidylserine decarboxylase family. PSD-A subfamily. As to quaternary structure, heterodimer of a large membrane-associated beta subunit and a small pyruvoyl-containing alpha subunit. It depends on pyruvate as a cofactor. Is synthesized initially as an inactive proenzyme. Formation of the active enzyme involves a self-maturation process in which the active site pyruvoyl group is generated from an internal serine residue via an autocatalytic post-translational modification. Two non-identical subunits are generated from the proenzyme in this reaction, and the pyruvate is formed at the N-terminus of the alpha chain, which is derived from the carboxyl end of the proenzyme. The post-translation cleavage follows an unusual pathway, termed non-hydrolytic serinolysis, in which the side chain hydroxyl group of the serine supplies its oxygen atom to form the C-terminus of the beta chain, while the remainder of the serine residue undergoes an oxidative deamination to produce ammonia and the pyruvoyl prosthetic group on the alpha chain.

The protein localises to the cell membrane. The catalysed reaction is a 1,2-diacyl-sn-glycero-3-phospho-L-serine + H(+) = a 1,2-diacyl-sn-glycero-3-phosphoethanolamine + CO2. The protein operates within phospholipid metabolism; phosphatidylethanolamine biosynthesis; phosphatidylethanolamine from CDP-diacylglycerol: step 2/2. Its function is as follows. Catalyzes the formation of phosphatidylethanolamine (PtdEtn) from phosphatidylserine (PtdSer). The chain is Phosphatidylserine decarboxylase proenzyme from Afipia carboxidovorans (strain ATCC 49405 / DSM 1227 / KCTC 32145 / OM5) (Oligotropha carboxidovorans).